The primary structure comprises 183 residues: UPF0397 protein PBPRA2239 (183 aa).

A run of 5 helical transmembrane segments spans residues 8–28 (VVLI…MFGI), 41–61 (AVLA…VGFI), 69–89 (FAGW…GLII), 110–130 (FALF…CSAY), and 147–167 (LIII…YILT).

This sequence belongs to the UPF0397 family.

The protein resides in the cell membrane. The sequence is that of UPF0397 protein PBPRA2239 from Photobacterium profundum (strain SS9).